We begin with the raw amino-acid sequence, 1235 residues long: ATP-dependent helicase/nuclease subunit A (1235 aa).

The 471-residue stretch at Thr12–Arg482 folds into the UvrD-like helicase ATP-binding domain. Ala33 to Thr40 contributes to the ATP binding site. Residues Ala509–Gly800 form the UvrD-like helicase C-terminal domain.

The protein belongs to the helicase family. AddA subfamily. As to quaternary structure, heterodimer of AddA and AddB/RexB. Mg(2+) is required as a cofactor.

The enzyme catalyses Couples ATP hydrolysis with the unwinding of duplex DNA by translocating in the 3'-5' direction.. The catalysed reaction is ATP + H2O = ADP + phosphate + H(+). Its function is as follows. The heterodimer acts as both an ATP-dependent DNA helicase and an ATP-dependent, dual-direction single-stranded exonuclease. Recognizes the chi site generating a DNA molecule suitable for the initiation of homologous recombination. The AddA nuclease domain is required for chi fragment generation; this subunit has the helicase and 3' -&gt; 5' nuclease activities. The protein is ATP-dependent helicase/nuclease subunit A of Listeria welshimeri serovar 6b (strain ATCC 35897 / DSM 20650 / CCUG 15529 / CIP 8149 / NCTC 11857 / SLCC 5334 / V8).